The primary structure comprises 442 residues: MSIDINWEAATSGPDGEKLAERIRSFIHDKFQQIALPRFIRSVEVNSFDFGTVSPELQVRDICDPFNDFYEEDEDGEDLSESSVSDEPAPSSQGLSQSTPNGDAGSSNSSSNGDGGGNTNSRVGYFQRRYPSGEYAGDFPQPLMSPINLGESFNPYLFPRAGTPGIPGGTSNLGYYNMPRGGLSGTQTPLASVASVARGGPLSLAEGWPPPARQRERARSSDADVDSPQSRSRPSTSSTRQRTSTDGGTPHDSAEIPESESVITGHLDSALPTRRMREQKPDDFQVLCRLQYSGNMRLSITAQILLDYPMPSFVGLPLKLNITGFTFDGVAVVAYIRKRIHVCFLSPEDADTLLGADDKMASTEGYHDHHNHHHSGNTNTTGSRRSNDSLLREIRVESEIGRKESGKQVLKNVGKVEKFVLEQVRRIFEEEFVYPSFWTFLV.

Residues 1–442 (MSIDINWEAA…VYPSFWTFLV (442 aa)) form the SMP-LTD domain. Disordered stretches follow at residues 67-125 (NDFY…RVGY), 202-277 (LSLA…RRMR), and 364-387 (EGYH…RRSN). A compositionally biased stretch (acidic residues) spans 69–80 (FYEEDEDGEDLS). The span at 90 to 100 (PSSQGLSQSTP) shows a compositional bias: polar residues. Low complexity predominate over residues 101 to 112 (NGDAGSSNSSSN). Positions 213 to 222 (RQRERARSSD) are enriched in basic and acidic residues. Positions 227–245 (SPQSRSRPSTSSTRQRTST) are enriched in low complexity.

The protein belongs to the MDM12 family. Component of the ER-mitochondria encounter structure (ERMES) or MDM complex, composed of MMM1, MDM10, MDM12 and MDM34. An MMM1 homodimer associates with one molecule of MDM12 on each side in a pairwise head-to-tail manner, and the SMP-LTD domains of MMM1 and MDM12 generate a continuous hydrophobic tunnel for phospholipid trafficking.

Its subcellular location is the mitochondrion outer membrane. It localises to the endoplasmic reticulum membrane. Component of the ERMES/MDM complex, which serves as a molecular tether to connect the endoplasmic reticulum (ER) and mitochondria. Components of this complex are involved in the control of mitochondrial shape and protein biogenesis, and function in nonvesicular lipid trafficking between the ER and mitochondria. MDM12 is required for the interaction of the ER-resident membrane protein MMM1 and the outer mitochondrial membrane-resident beta-barrel protein MDM10. The MDM12-MMM1 subcomplex functions in the major beta-barrel assembly pathway that is responsible for biogenesis of all mitochondrial outer membrane beta-barrel proteins, and acts in a late step after the SAM complex. The MDM10-MDM12-MMM1 subcomplex further acts in the TOM40-specific pathway after the action of the MDM12-MMM1 complex. Essential for establishing and maintaining the structure of mitochondria and maintenance of mtDNA nucleoids. This is Mitochondrial distribution and morphology protein 12 from Arthroderma otae (strain ATCC MYA-4605 / CBS 113480) (Microsporum canis).